Here is a 356-residue protein sequence, read N- to C-terminus: Fructose import permease protein FruF (356 aa).

A run of 7 helical transmembrane segments spans residues 25–45, 77–97, 113–133, 180–200, 231–251, 268–290, and 308–328; these read IVAF…FLAL, LVIS…VAGA, ILIA…LVSF, FILG…LVGL, ILFL…LFAT, MYAI…SLAG, and LGVN…VICV.

It belongs to the binding-protein-dependent transport system permease family. As to quaternary structure, the complex is composed of an ATP-binding protein (FruK), two transmembrane proteins (FruF and FruG) and a solute-binding protein (FruE).

Its subcellular location is the cell membrane. Functionally, part of the high-affinity ABC transporter complex FruEKFG involved in fructose uptake. Can also transport ribose and xylose, with lower affinity. Probably responsible for the translocation of the substrate across the membrane. This chain is Fructose import permease protein FruF, found in Bifidobacterium longum (strain NCC 2705).